Reading from the N-terminus, the 772-residue chain is MGWFTGIACLFWGILLTARANYANGKNNVPRLKLSYKEMLESNNVITFNGLANSSSYHTFLLDEERSRLYVGAKDHIFSFNLVNIKDFQKIVWPVSYTRRDECKWAGKDILKECANFIKVLKAYNQTHLYACGTGAFHPICTYIEVGHHPEDNIFKLQDSHFENGRGKSPYDPKLLTASLLIDGELYSGTAADFMGRDFAIFRTLGHHHPIRTEQHDSRWLNDPRFISAHLIPESDNPEDDKVYFFFRENAIDGEHSGKATHARIGQICKNDFGGHRSLVNKWTTFLKARLICSVPGPNGIDTHFDELQDVFLMNSKDPKNPIVYGVFTTSSNIFKGSAVCMYSMSDVRRVFLGPYAHRDGPNYQWVPYQGRVPYPRPGTCPSKTFGGFDSTKDLPDDVITFARSHPAMYNPVFPINNRPIMIKTDVNYQFTQIVVDRVDAEDGQYDVMFIGTDVGTVLKVVSVPKETWHDLEEVLLEEMTVFREPTTISAMELSTKQQQLYIGSTAGVAQLPLHRCDIYGKACAECCLARDPYCAWDGSSCSRYFPTAKRRTRRQDIRNGDPLTHCSDLQHHDNHHGHSLEERIIYGVENSSTFLECSPKSQRALVYWQFQRRNEDRKEEIRVGDHIIRTEQGLLLRSLQKKDSGNYLCHAVEHGFMQTLLKVTLEVIDTEHLEELLHKDDDGDGSKTKEMSSSMTPSQKVWYRDFMQLINHPNLNTMDEFCEQVWKRDRKQRRQRPGHSQGSSNKWKHMQESKKGRNRRTHEFERAPRSV.

Positions methionine 1–alanine 20 are cleaved as a signal peptide. Residues arginine 31–leucine 514 enclose the Sema domain. Asparagine 53 is a glycosylation site (N-linked (GlcNAc...) asparagine). Residues cysteine 103 and cysteine 114 are joined by a disulfide bond. N-linked (GlcNAc...) asparagine glycosylation occurs at asparagine 125. 4 disulfides stabilise this stretch: cysteine 132–cysteine 141, cysteine 269–cysteine 381, cysteine 293–cysteine 341, and cysteine 517–cysteine 535. An Ig-like C2-type domain is found at histidine 577–threonine 665. Asparagine 591 carries N-linked (GlcNAc...) asparagine glycosylation. The cysteines at positions 650 and 723 are disulfide-linked. Residues leucine 677–glutamate 691 show a composition bias toward basic and acidic residues. Disordered stretches follow at residues leucine 677 to proline 698 and arginine 729 to valine 772. The span at arginine 729 to proline 738 shows a compositional bias: basic residues. Basic and acidic residues predominate over residues histidine 750–valine 772.

It belongs to the semaphorin family. In terms of assembly, interacts with PLXND1. In terms of tissue distribution, expressed in the dorsal root ganglia.

It localises to the secreted. Its function is as follows. May be involved in guiding growing axons towards their targets by forming a molecular boundary that instructs axons to engage in the formation of specific nerve tracts. Binds to neuropilin. Involved in the development of the olfactory system and in neuronal control of puberty. The chain is Semaphorin-3A (Sema3a) from Rattus norvegicus (Rat).